The chain runs to 426 residues: Phosphomethylpyrimidine synthase (426 aa).

Substrate contacts are provided by residues N65, M94, Y123, H162, 184-186 (SRG), 225-228 (DGLR), and E264. H268 contributes to the Zn(2+) binding site. Position 291 (Y291) interacts with substrate. Residue H332 coordinates Zn(2+). The [4Fe-4S] cluster site is built by C409, C412, and C416.

This sequence belongs to the ThiC family. It depends on [4Fe-4S] cluster as a cofactor.

It carries out the reaction 5-amino-1-(5-phospho-beta-D-ribosyl)imidazole + S-adenosyl-L-methionine = 4-amino-2-methyl-5-(phosphooxymethyl)pyrimidine + CO + 5'-deoxyadenosine + formate + L-methionine + 3 H(+). The protein operates within cofactor biosynthesis; thiamine diphosphate biosynthesis. Functionally, catalyzes the synthesis of the hydroxymethylpyrimidine phosphate (HMP-P) moiety of thiamine from aminoimidazole ribotide (AIR) in a radical S-adenosyl-L-methionine (SAM)-dependent reaction. The polypeptide is Phosphomethylpyrimidine synthase (Thermodesulfovibrio yellowstonii (strain ATCC 51303 / DSM 11347 / YP87)).